The sequence spans 154 residues: Large ribosomal subunit protein uL13 (154 aa).

The protein belongs to the universal ribosomal protein uL13 family. Part of the 50S ribosomal subunit.

Functionally, this protein is one of the early assembly proteins of the 50S ribosomal subunit, although it is not seen to bind rRNA by itself. It is important during the early stages of 50S assembly. The protein is Large ribosomal subunit protein uL13 of Rhizobium rhizogenes (strain K84 / ATCC BAA-868) (Agrobacterium radiobacter).